The chain runs to 379 residues: Wnt inhibitory factor 1 (379 aa).

The first 28 residues, 1–28 (MARRSAFPAAALWLWSILLCLLALRAEA), serve as a signal peptide directing secretion. The WIF domain occupies 38 to 177 (LWIDAHQARV…PQNAIFFKTC (140 aa)). A glycan (N-linked (GlcNAc...) asparagine) is linked at Asn-88. Cystine bridges form between Cys-140-Cys-177, Cys-182-Cys-192, Cys-186-Cys-198, Cys-200-Cys-209, Cys-214-Cys-224, Cys-218-Cys-230, and Cys-232-Cys-241. 5 EGF-like domains span residues 178–210 (QQAE…PHCE), 211–242 (KALC…VNCD), 243–271 (KANC…LEGE), 274–306 (EISK…DLCS), and 307–338 (KPVC…RHCN). Asn-245 carries N-linked (GlcNAc...) asparagine glycosylation. Intrachain disulfides connect Cys-246/Cys-256, Cys-250/Cys-262, Cys-278/Cys-288, Cys-282/Cys-294, Cys-296/Cys-305, Cys-310/Cys-320, Cys-314/Cys-326, and Cys-328/Cys-337. The segment at 354-379 (AQLRQHTPSLKKAEERRDPPESNYIW) is disordered. Residues 364–373 (KKAEERRDPP) show a composition bias toward basic and acidic residues.

Interacts with MYOC.

Its subcellular location is the secreted. Its function is as follows. Binds to WNT proteins and inhibits their activities. May be involved in mesoderm segmentation. The sequence is that of Wnt inhibitory factor 1 (WIF1) from Homo sapiens (Human).